An 86-amino-acid chain; its full sequence is RNA-binding protein Hfq (86 aa).

Residues 9-68 (DPYLNTLRKEKVPVSIYLVNGIKLQGQIESFDQFVVLLKNTVSQMVYKHAISTVVPARPV) form the Sm domain. The tract at residues 66-86 (RPVRLPSPSDAEHGDSEPGNA) is disordered. Residues 75–86 (DAEHGDSEPGNA) are compositionally biased toward basic and acidic residues.

Belongs to the Hfq family. As to quaternary structure, homohexamer.

Its function is as follows. RNA chaperone that binds small regulatory RNA (sRNAs) and mRNAs to facilitate mRNA translational regulation in response to envelope stress, environmental stress and changes in metabolite concentrations. Also binds with high specificity to tRNAs. The protein is RNA-binding protein Hfq of Pseudomonas entomophila (strain L48).